The following is a 427-amino-acid chain: Beta-porphyranase D (427 aa).

An N-terminal signal peptide occupies residues 1 to 19 (MILKQAILTLVLVNANLFA). Positions 23-45 (PKTYSSTDKETRQGPPKPPMGKR) are disordered. The GH16 domain occupies 32-308 (ETRQGPPKPP…WVRAYRLVDV (277 aa)). Substrate is bound by residues tryptophan 73, arginine 76, glutamate 168, glutamate 173, and glutamate 272. The active-site Nucleophile is glutamate 168. Catalysis depends on glutamate 173, which acts as the Proton donor.

Belongs to the glycosyl hydrolase 16 family.

Its subcellular location is the periplasm. The catalysed reaction is Hydrolysis of beta-D-galactopyranose-(1-&gt;4)-alpha-L-galactopyranose-6-sulfate linkages in porphyran.. Its function is as follows. Cleaves the sulfated polysaccharide porphyran at the (1-&gt;4) linkages between beta-D-galactopyranose and alpha-L-galactopyranose-6-sulfate, forming mostly the disaccharide alpha-L-galactopyranose-6-sulfate-(1-&gt;3)-beta-D-galactose. This chain is Beta-porphyranase D (porD), found in Zobellia galactanivorans (strain DSM 12802 / CCUG 47099 / CIP 106680 / NCIMB 13871 / Dsij).